A 435-amino-acid chain; its full sequence is Keratin, type I cytoskeletal 18 (435 aa).

A head region spans residues Ser-2–Asn-84. The interval Glu-85–Ala-120 is coil 1A. Residues Glu-85–Leu-396 enclose the IF rod domain. The segment at Leu-121 to Thr-137 is linker 1. The tract at residues Leu-138–Leu-229 is coil 1B. The tract at residues Arg-230–Val-253 is linker 12. The coil 2 stretch occupies residues Leu-254–Gly-391. The tract at residues Glu-392–Lys-435 is tail.

The protein belongs to the intermediate filament family. In terms of assembly, heterotetramer of two type I and two type II keratins. Keratin-18 associates with keratin-8. Post-translationally, phosphorylated. Proteolytically cleaved by caspases during epithelial cell apoptosis.

Its function is as follows. When phosphorylated, plays a role in filament reorganization. This Acipenser baerii (Siberian sturgeon) protein is Keratin, type I cytoskeletal 18.